The sequence spans 388 residues: Succinate--CoA ligase [ADP-forming] subunit beta (388 aa).

The region spanning 9-244 is the ATP-grasp domain; that stretch reads KQLFREYGLP…TTQDDEREMH (236 aa). Residues Lys46, 53 to 55, Glu99, Ser102, and Glu107 each bind ATP; that span reads GRG. The Mg(2+) site is built by Asn199 and Asp213. Residues Asn264 and 321-323 contribute to the substrate site; that span reads GIV.

It belongs to the succinate/malate CoA ligase beta subunit family. As to quaternary structure, heterotetramer of two alpha and two beta subunits. Mg(2+) is required as a cofactor.

It catalyses the reaction succinate + ATP + CoA = succinyl-CoA + ADP + phosphate. The catalysed reaction is GTP + succinate + CoA = succinyl-CoA + GDP + phosphate. It functions in the pathway carbohydrate metabolism; tricarboxylic acid cycle; succinate from succinyl-CoA (ligase route): step 1/1. In terms of biological role, succinyl-CoA synthetase functions in the citric acid cycle (TCA), coupling the hydrolysis of succinyl-CoA to the synthesis of either ATP or GTP and thus represents the only step of substrate-level phosphorylation in the TCA. The beta subunit provides nucleotide specificity of the enzyme and binds the substrate succinate, while the binding sites for coenzyme A and phosphate are found in the alpha subunit. The chain is Succinate--CoA ligase [ADP-forming] subunit beta from Psychromonas ingrahamii (strain DSM 17664 / CCUG 51855 / 37).